Here is a 102-residue protein sequence, read N- to C-terminus: Protein RnfH (102 aa).

The protein belongs to the UPF0125 (RnfH) family.

This is Protein RnfH from Haemophilus influenzae (strain 86-028NP).